Reading from the N-terminus, the 107-residue chain is uncharacterized protein (107 aa).

Residues 1-32 (MDSLASGRWRRRRTEELPAAGDAKRACRRSEP) form a disordered region. The segment covering 22-31 (DAKRACRRSE) has biased composition (basic and acidic residues).

This is an uncharacterized protein from Mus musculus (Mouse).